The chain runs to 86 residues: Exodeoxyribonuclease 7 small subunit (86 aa).

The segment at 1–26 (MQDELFETEKAPQKNTKNAKNAPKKS) is disordered.

It belongs to the XseB family. As to quaternary structure, heterooligomer composed of large and small subunits.

It localises to the cytoplasm. The catalysed reaction is Exonucleolytic cleavage in either 5'- to 3'- or 3'- to 5'-direction to yield nucleoside 5'-phosphates.. Its function is as follows. Bidirectionally degrades single-stranded DNA into large acid-insoluble oligonucleotides, which are then degraded further into small acid-soluble oligonucleotides. This is Exodeoxyribonuclease 7 small subunit from Helicobacter pylori (strain Shi470).